The sequence spans 145 residues: D-aminoacyl-tRNA deacylase (145 aa).

A Gly-cisPro motif, important for rejection of L-amino acids motif is present at residues 137 to 138; sequence GP.

The protein belongs to the DTD family. Homodimer.

It is found in the cytoplasm. The enzyme catalyses glycyl-tRNA(Ala) + H2O = tRNA(Ala) + glycine + H(+). It catalyses the reaction a D-aminoacyl-tRNA + H2O = a tRNA + a D-alpha-amino acid + H(+). Functionally, an aminoacyl-tRNA editing enzyme that deacylates mischarged D-aminoacyl-tRNAs. Also deacylates mischarged glycyl-tRNA(Ala), protecting cells against glycine mischarging by AlaRS. Acts via tRNA-based rather than protein-based catalysis; rejects L-amino acids rather than detecting D-amino acids in the active site. By recycling D-aminoacyl-tRNA to D-amino acids and free tRNA molecules, this enzyme counteracts the toxicity associated with the formation of D-aminoacyl-tRNA entities in vivo and helps enforce protein L-homochirality. In Salmonella arizonae (strain ATCC BAA-731 / CDC346-86 / RSK2980), this protein is D-aminoacyl-tRNA deacylase.